Reading from the N-terminus, the 279-residue chain is NAD kinase (279 aa).

Catalysis depends on Asp57, which acts as the Proton acceptor. NAD(+) is bound by residues 57-58, 133-134, Arg159, Asp161, and 172-177; these read DG, NE, and TAYNKS.

Belongs to the NAD kinase family. It depends on a divalent metal cation as a cofactor.

Its subcellular location is the cytoplasm. It catalyses the reaction NAD(+) + ATP = ADP + NADP(+) + H(+). Functionally, involved in the regulation of the intracellular balance of NAD and NADP, and is a key enzyme in the biosynthesis of NADP. Catalyzes specifically the phosphorylation on 2'-hydroxyl of the adenosine moiety of NAD to yield NADP. This Streptococcus pyogenes serotype M28 (strain MGAS6180) protein is NAD kinase.